The sequence spans 580 residues: PTS system fructose-specific EIIB'BC component (580 aa).

PTS EIIB type-2 domains follow at residues 1–99 and 120–215; these read MSSS…QLAA and IVAI…KALA. The active-site Phosphocysteine intermediate; for EIIB activity is the C126. At C126 the chain carries Phosphocysteine; by EIIA. The region spanning 243–580 is the PTS EIIC type-2 domain; sequence AYKHLMTGVS…LKKPVADVIA (338 aa). 9 helical membrane-spanning segments follow: residues 254–274, 289–309, 332–352, 369–389, 410–430, 451–471, 483–503, 509–529, and 549–571; these read MLPF…LGGI, LFQI…AGYI, LNAG…GVAA, VLIL…YVFG, SALL…GGPV, AAAM…TWVF, ATAA…PYAA, TIPA…TAGA, and HLLN…LRLL.

The protein localises to the cell inner membrane. The enzyme catalyses D-fructose(out) + N(pros)-phospho-L-histidyl-[protein] = D-fructose 1-phosphate(in) + L-histidyl-[protein]. The phosphoenolpyruvate-dependent sugar phosphotransferase system (sugar PTS), a major carbohydrate active transport system, catalyzes the phosphorylation of incoming sugar substrates concomitantly with their translocation across the cell membrane. The enzyme II FruAB PTS system is involved in fructose transport. This chain is PTS system fructose-specific EIIB'BC component, found in Xanthomonas campestris pv. campestris (strain ATCC 33913 / DSM 3586 / NCPPB 528 / LMG 568 / P 25).